We begin with the raw amino-acid sequence, 163 residues long: CDP-archaeol synthase (163 aa).

Helical transmembrane passes span 4 to 24, 52 to 72, 75 to 95, 107 to 127, and 128 to 148; these read LLLG…APFI, LLLS…FLGI, IIIG…GAFI, APIL…ISFN, and VNLN…LHMF.

The protein belongs to the CDP-archaeol synthase family. It depends on Mg(2+) as a cofactor.

It localises to the cell membrane. It carries out the reaction 2,3-bis-O-(geranylgeranyl)-sn-glycerol 1-phosphate + CTP + H(+) = CDP-2,3-bis-O-(geranylgeranyl)-sn-glycerol + diphosphate. The protein operates within membrane lipid metabolism; glycerophospholipid metabolism. Functionally, catalyzes the formation of CDP-2,3-bis-(O-geranylgeranyl)-sn-glycerol (CDP-archaeol) from 2,3-bis-(O-geranylgeranyl)-sn-glycerol 1-phosphate (DGGGP) and CTP. This reaction is the third ether-bond-formation step in the biosynthesis of archaeal membrane lipids. The polypeptide is CDP-archaeol synthase (Sulfolobus acidocaldarius (strain ATCC 33909 / DSM 639 / JCM 8929 / NBRC 15157 / NCIMB 11770)).